The sequence spans 238 residues: 15,16-dihydrobiliverdin:ferredoxin oxidoreductase (238 aa).

Belongs to the HY2 family.

It catalyses the reaction 15,16-dihydrobiliverdin + oxidized 2[4Fe-4S]-[ferredoxin] = biliverdin IXalpha + reduced 2[4Fe-4S]-[ferredoxin] + 2 H(+). In terms of biological role, catalyzes the two-electron reduction of biliverdin IX-alpha at the C15 methine bridge. The sequence is that of 15,16-dihydrobiliverdin:ferredoxin oxidoreductase from Prochlorococcus marinus (strain NATL2A).